A 457-amino-acid chain; its full sequence is ATP synthase subunit beta (457 aa).

147–154 (GGAGVGKT) is a binding site for ATP.

It belongs to the ATPase alpha/beta chains family. As to quaternary structure, F-type ATPases have 2 components, CF(1) - the catalytic core - and CF(0) - the membrane proton channel. CF(1) has five subunits: alpha(3), beta(3), gamma(1), delta(1), epsilon(1). CF(0) has three main subunits: a(1), b(2) and c(9-12). The alpha and beta chains form an alternating ring which encloses part of the gamma chain. CF(1) is attached to CF(0) by a central stalk formed by the gamma and epsilon chains, while a peripheral stalk is formed by the delta and b chains.

It localises to the cell inner membrane. It catalyses the reaction ATP + H2O + 4 H(+)(in) = ADP + phosphate + 5 H(+)(out). Produces ATP from ADP in the presence of a proton gradient across the membrane. The catalytic sites are hosted primarily by the beta subunits. The sequence is that of ATP synthase subunit beta from Histophilus somni (strain 2336) (Haemophilus somnus).